The sequence spans 116 residues: Omega-ctenitoxin-Pn3a (116 aa).

The N-terminal stretch at 1 to 19 (MKMKLLGIILLVSFPFVLG) is a signal peptide. Positions 20–38 (FAGIPIEEGENSVEVGEVE) are excised as a propeptide. 7 cysteine pairs are disulfide-bonded: Cys41–Cys58, Cys48–Cys64, Cys55–Cys90, Cys57–Cys78, Cys66–Cys76, Cys96–Cys102, and Cys106–Cys111. His115 carries the histidine amide modification.

Belongs to the neurotoxin 04 (omega-agtx) family. 03 (type II/III omega-agtx) subfamily. As to expression, expressed by the venom gland.

Its subcellular location is the secreted. Its function is as follows. This toxin is a potent and practically irreversible antagonist of both Cav2.1/CACNA1A and Cav2.2/CACNA1B calcium channels, while it displays a partial and rapidly reversible block of Cav2.3/CACNA1E calcium channels and no effect on Cav3/CACNA1 calcium channels. Inhibits glutamate uptake from rat brain synaptosomes by an interaction between cysteines from both glutamate transporter and toxin. Blocks potassium-induced exocytosis of synaptic vesicles in brain cortical synaptosomes (IC(50)=1.1 nM). In rat brain, inhibits glutamate release, neuronal death and loss of neurotransmission in the hippocampus resulting from ischemia. In vivo, induces rapid general flaccid paralysis followed by death in 10-30 minutes at dose levels of 5 ug per mouse. This is Omega-ctenitoxin-Pn3a from Phoneutria nigriventer (Brazilian armed spider).